The chain runs to 635 residues: Dihydrolipoyllysine-residue acetyltransferase component of pyruvate dehydrogenase complex, mitochondrial (635 aa).

Positions 83-160 constitute a Lipoyl-binding 1 domain; the sequence is GKEITMPALS…EINKPIAIIV (78 aa). Lysine 124 carries the N6-lipoyllysine modification. A disordered region spans residues 171–204; that stretch reads KNYKPSSQASSTPVQEEAPKPKQEAPKKSTKTYP. Over residues 174-184 the composition is skewed to polar residues; sequence KPSSQASSTPV. The segment covering 187 to 197 has biased composition (basic and acidic residues); it reads EAPKPKQEAPK. A Lipoyl-binding 2 domain is found at 206 to 283; the sequence is HKVVGMPALS…QINQPVCIIV (78 aa). At lysine 247 the chain carries N6-lipoyllysine. A disordered region spans residues 295–338; that stretch reads YSVEEQSSSSSSSSQESTPSSSSSSSQESTPSQSSSQQTTRKSG. Low complexity predominate over residues 298 to 334; sequence EEQSSSSSSSSQESTPSSSSSSSQESTPSQSSSQQTT. The 38-residue stretch at 342–379 folds into the Peripheral subunit-binding (PSBD) domain; it reads FATPAARFEASSKGYDLSAINGTGPNNRILKADVLEFV. A disordered region spans residues 382 to 413; sequence KQEVAQQQQQQTTTTTKKPTTPTSSGEFTDIP. Residues 387–404 are compositionally biased toward low complexity; the sequence is QQQQQQTTTTTKKPTTPT. Residues 403–635 form a catalytic region; it reads PTSSGEFTDI…YVENPIKLIL (233 aa).

The protein belongs to the 2-oxoacid dehydrogenase family. 20 to 30 alpha(2)-beta(2) tetramers of E1 + 6 homodimers of E3 + 60 copies of E2. Requires (R)-lipoate as cofactor.

The protein resides in the mitochondrion matrix. The catalysed reaction is N(6)-[(R)-dihydrolipoyl]-L-lysyl-[protein] + acetyl-CoA = N(6)-[(R)-S(8)-acetyldihydrolipoyl]-L-lysyl-[protein] + CoA. In terms of biological role, the pyruvate dehydrogenase complex catalyzes the overall conversion of pyruvate to acetyl-CoA and CO(2). It contains multiple copies of three enzymatic components: pyruvate dehydrogenase (E1), dihydrolipoamide acetyltransferase (E2) and lipoamide dehydrogenase (E3). The protein is Dihydrolipoyllysine-residue acetyltransferase component of pyruvate dehydrogenase complex, mitochondrial (pdhC) of Dictyostelium discoideum (Social amoeba).